The primary structure comprises 376 residues: MSIWMEGFKAVRTLNAAGFEAYIVGGAVRDYLLGKDVDDVDIATQASPHQVADIFTKGVHINQEHKTVLIPGEKGPIEITTYKGETLAEDLQKRDFTINALAMTETREVIDPYGGRQDLQKRLLRSYDAQKRLSEDPLRMLRAARFISSLGFEADRQLVKETTVQKAALQRCARERVVVELEKLLKGMETEAAFAFLQETGAIHSLPGIQITDSQLAELMRLPKQQWDSGDRAWLEFAICTGGPSSMAALPLPKKRKQLVAAGLKAFEYRQTQQRWSDWQLYISGLAIAMQIEEIRAGRQLPSIQKEELAEQWSALPIKAKSDLAITGRDLLHAKAAPGPWMKEALQAAEKAVVTKKCPNEKAAILAFLTMREDGK.

Residue 26 to 29 coordinates CTP; it reads GAVR. Mg(2+)-binding residues include Asp39 and Asp41. Residues 94–95, Asn99, 136–145, and Arg176 each bind CTP; these read RD and DPLRMLRAAR.

Belongs to the tRNA nucleotidyltransferase/poly(A) polymerase family. Requires Mg(2+) as cofactor.

It catalyses the reaction a tRNA precursor + 2 CTP = a tRNA with a 3' CC end + 2 diphosphate. In terms of biological role, tRNA nucleotidyltransferase involved in the synthesis of the tRNA CCA terminus. Adds the two cytidine residues to tRNA. The chain is CC-adding tRNA nucleotidyltransferase from Shouchella clausii (strain KSM-K16) (Alkalihalobacillus clausii).